Here is a 180-residue protein sequence, read N- to C-terminus: Superoxide dismutase [Cu-Zn] (180 aa).

Residues 1-19 (MFMNLLSQVSNAIFPQVEA) form the signal peptide. His-68, His-70, and His-85 together coordinate Cu cation. Cys-79 and Cys-171 are disulfide-bonded. Zn(2+) contacts are provided by His-85, His-93, His-102, and Asp-105. Cu cation is bound at residue His-142.

This sequence belongs to the Cu-Zn superoxide dismutase family. Homodimer. It depends on Cu cation as a cofactor. Zn(2+) serves as cofactor.

It is found in the cytoplasm. The catalysed reaction is 2 superoxide + 2 H(+) = H2O2 + O2. Its function is as follows. Destroys radicals which are normally produced within the cells and which are toxic to biological systems. Required for normal brood size. May be involved in regulating mpk-1 phosphorylation downstream of phosphatase ptp-2 during oocyte maturation. The sequence is that of Superoxide dismutase [Cu-Zn] from Caenorhabditis briggsae.